The following is a 137-amino-acid chain: Phosphoribosyl-AMP cyclohydrolase (137 aa).

Asp84 is a binding site for Mg(2+). Cys85 contacts Zn(2+). Mg(2+) contacts are provided by Asp86 and Asp88. Residues Cys101 and Cys108 each coordinate Zn(2+).

This sequence belongs to the PRA-CH family. As to quaternary structure, homodimer. Requires Mg(2+) as cofactor. The cofactor is Zn(2+).

It localises to the cytoplasm. It catalyses the reaction 1-(5-phospho-beta-D-ribosyl)-5'-AMP + H2O = 1-(5-phospho-beta-D-ribosyl)-5-[(5-phospho-beta-D-ribosylamino)methylideneamino]imidazole-4-carboxamide. The protein operates within amino-acid biosynthesis; L-histidine biosynthesis; L-histidine from 5-phospho-alpha-D-ribose 1-diphosphate: step 3/9. Functionally, catalyzes the hydrolysis of the adenine ring of phosphoribosyl-AMP. This is Phosphoribosyl-AMP cyclohydrolase from Chlorobaculum tepidum (strain ATCC 49652 / DSM 12025 / NBRC 103806 / TLS) (Chlorobium tepidum).